The chain runs to 505 residues: Peroxisome proliferator-activated receptor gamma (505 aa).

The disordered stretch occupies residues 1–26; that stretch reads MGETLGDSLIDPESDSFADTLSASTS. Residues 17 to 26 show a composition bias toward polar residues; the sequence is FADTLSASTS. Residue Ser-112 is modified to Phosphoserine; by MAPK. The segment at residues 136–210 is a DNA-binding region (nuclear receptor); sequence AIECRVCGDK…VGMSHNAIRF (75 aa). 2 consecutive NR C4-type zinc fingers follow at residues 139-159 and 176-198; these read CRVCGDKASGFHYGVHACEGC and CDLNCRIHKKSRNKCQYCRFQKC. Residues 205 to 280 are interaction with FAM120B; the sequence is HNAIRFGRMP…DKSPFVIYDM (76 aa). An NR LBD domain is found at 238-503; that stretch reads DLRALAKHLY…HPLLQEIYKD (266 aa). Residue Lys-252 forms a Glycyl lysine isopeptide (Lys-Gly) (interchain with G-Cter in ubiquitin) linkage. Positions 495 to 503 match the 9aaTAD motif; sequence PLLQEIYKD.

Belongs to the nuclear hormone receptor family. NR1 subfamily. As to quaternary structure, interacts with FOXO1 (acetylated form). Heterodimer with other nuclear receptors, such as RXRA. The heterodimer with the retinoic acid receptor RXRA is called adipocyte-specific transcription factor ARF6. Interacts with NCOA6 coactivator, leading to a strong increase in transcription of target genes. Interacts with coactivator PPARBP, leading to a mild increase in transcription of target genes. Interacts with NOCA7 in a ligand-inducible manner. Interacts with NCOA1 and NCOA2 LXXLL motifs. Interacts with ASXL1, ASXL2, DNTTIP2, FAM120B, MAP2K1/MEK1, NR0B2, PDPK1, PRDM16, PRMT2 and TGFB1I1. Interacts (when activated by agonist) with PPP5C. Interacts with HELZ2 and THRAP3; the interaction stimulates the transcriptional activity of PPARG. Interacts with PER2, the interaction is ligand dependent and blocks PPARG recruitment to target promoters. Interacts with NOCT. Interacts with ACTN4. Interacts (when in the liganded conformation) with GPS2. Interacts with CRY1 and CRY2 in a ligand-dependent manner. In the absence of hormonal ligand, interacts with TACC1. In macrophages, interacts with PAQR3 and STUB1; the interactions promote PPARG poylubiquitination and STUB1-mediated degradation. In terms of processing, phosphorylated at basal conditions and dephosphorylated when treated with the ligand. May be dephosphorylated by PPP5C. The phosphorylated form may be inactive and dephosphorylation induces adipogenic activity. Post-translationally, ubiquitinated by E3 ubiquitin-protein ligase complex containing FBXO9; leading to proteasomal degradation. Ubiquitinated at Lys-252 by TRIM55 leading to proteasomal degradation. Ubiquitinated by E3 ubiquitin-protein ligase STUB1/CHIP; leading to proteasomal degradation.

It is found in the nucleus. The protein localises to the cytoplasm. With respect to regulation, PDPK1 activates its transcriptional activity independently of its kinase activity. In terms of biological role, nuclear receptor that binds peroxisome proliferators such as hypolipidemic drugs and fatty acids. Once activated by a ligand, the nuclear receptor binds to DNA specific PPAR response elements (PPRE) and modulates the transcription of its target genes, such as acyl-CoA oxidase. It therefore controls the peroxisomal beta-oxidation pathway of fatty acids. Key regulator of adipocyte differentiation and glucose homeostasis. ARF6 acts as a key regulator of the tissue-specific adipocyte P2 (aP2) enhancer. Acts as a critical regulator of gut homeostasis by suppressing NF-kappa-B-mediated pro-inflammatory responses. Plays a role in the regulation of cardiovascular circadian rhythms by regulating the transcription of BMAL1 in the blood vessels. In Canis lupus familiaris (Dog), this protein is Peroxisome proliferator-activated receptor gamma (PPARG).